The primary structure comprises 375 residues: MAPGEREREAGPAKSALRKVRTATLVINLARGWQQWANENSTKQAQEPAGWLPGATHDLPNAPKEAGPYQHAPKTLSPKPDRDGEGQHSEEATEVSHIKRKEVTRTVVSKAYERGGDVNYLSHRYENDGGVSEAIQPENDIDRILLSHDSPTRRRKCTNLVSELTKGWKVMEQEEPTWKSDSVDTEDSGYGGDMEERPEQDAAPVAPARIKRPLLSQANRYSETLNCKAHRKYSQVDNLKGRWQQWADEHVQSQKLNPFSDEFDYDLAMSTRLHKGDEGYGRPKEGSKTAERAKRAEEHIYREIMELCFVIRTMARHRRDGKIQVTFGELFDRYVRISDKVVGILMRARKHGLVHFEGEMLWQGRDDHVVITLLE.

2 stretches are compositionally biased toward basic and acidic residues: residues Met1–Gly11 and Lys79–Lys99. 2 disordered regions span residues Met1–Val20 and Asn38–Lys99. A phosphoserine mark is found at Ser150 and Ser182. The span at Gln173–Ser182 shows a compositional bias: basic and acidic residues. The disordered stretch occupies residues Gln173–Pro204. Actin-binding stretches follow at residues Asp193–Ala293 and Lys294–Glu375. Interaction with actin regions lie at residues Ser234–Gly279 and Met346–Glu375.

As to quaternary structure, binds F-actin and ABLIM1, ABLIM2 and ABLIM3. Interaction with ABLIM2 and ABLIM3 enhances activity. In terms of tissue distribution, expressed specifically in heart and skeletal muscle.

Its subcellular location is the cytoplasm. It is found in the myofibril. It localises to the sarcomere. The protein localises to the cytoskeleton. Acts as an activator of serum response factor (SRF)-dependent transcription possibly by inducing nuclear translocation of MKL1 or MKL2 and through a mechanism requiring Rho-actin signaling. The sequence is that of Actin-binding Rho-activating protein from Mus musculus (Mouse).